Consider the following 116-residue polypeptide: Iron-sulfur cluster insertion protein ErpA (116 aa).

Residues C44, C108, and C110 each coordinate iron-sulfur cluster.

This sequence belongs to the HesB/IscA family. As to quaternary structure, homodimer. The cofactor is iron-sulfur cluster.

Required for insertion of 4Fe-4S clusters for at least IspG. The protein is Iron-sulfur cluster insertion protein ErpA of Pseudomonas putida (strain ATCC 47054 / DSM 6125 / CFBP 8728 / NCIMB 11950 / KT2440).